A 510-amino-acid polypeptide reads, in one-letter code: MTTIRTLVVAAEAFPLAKTGGLGDAVAGMVQALGHRPGGVDVQCELLMPAYRGTLDRLYRPRTVARLGGLPGGPASLVRGHCPGSGLSVLLLRNDALYDRPGIYVDDSGQGYPDNARRYAALAHAAARLAQGLPGLRPPHVVHAHDWHAALAPLLIHAAGLHYVKTLLTIHNLAFQGTFPAELASALGIPLACRHDDGALSDDRVNFLKAGIRYATRVTTVSRAYAREILTPAFGCGLHGLLRARGADLSPVPNGIDTALWNPAADPHLGGLRFDALDMRNKACCKAALQAELGLQLRADATVLAMGSRLTGQKMADVAIAALPALLEAHEHLQFALIGRGEPDLEAALRALAARYPGRCAVHIGYDEPLAHRLHAGADLLLHGSRFEPFGLTPLYAMRYGTLPVASRVGGMVDTIRDPGPAIEESCAGQGTGFLFDGSEPADMRQAVTRALRALAKPAVRDAMRRNAMQADFSWRTSAQAYAGLYANLASGPQRGRVPAPTLPLLANAA.

ADP-alpha-D-glucose is bound at residue K18.

Belongs to the glycosyltransferase 1 family. Bacterial/plant glycogen synthase subfamily.

The enzyme catalyses [(1-&gt;4)-alpha-D-glucosyl](n) + ADP-alpha-D-glucose = [(1-&gt;4)-alpha-D-glucosyl](n+1) + ADP + H(+). It functions in the pathway glycan biosynthesis; glycogen biosynthesis. Its function is as follows. Synthesizes alpha-1,4-glucan chains using ADP-glucose. This Bordetella bronchiseptica (strain ATCC BAA-588 / NCTC 13252 / RB50) (Alcaligenes bronchisepticus) protein is Glycogen synthase.